Reading from the N-terminus, the 76-residue chain is Small ribosomal subunit protein bS18 (76 aa).

Belongs to the bacterial ribosomal protein bS18 family. As to quaternary structure, part of the 30S ribosomal subunit. Forms a tight heterodimer with protein bS6.

Binds as a heterodimer with protein bS6 to the central domain of the 16S rRNA, where it helps stabilize the platform of the 30S subunit. The protein is Small ribosomal subunit protein bS18 of Marinobacter nauticus (strain ATCC 700491 / DSM 11845 / VT8) (Marinobacter aquaeolei).